A 293-amino-acid polypeptide reads, in one-letter code: Diaminopimelate epimerase (293 aa).

Asn17, Gln47, and Asn67 together coordinate substrate. Cys76 functions as the Proton donor in the catalytic mechanism. Substrate-binding positions include 77-78 (GN), Asn164, Asn197, and 215-216 (ER). Cys224 (proton acceptor) is an active-site residue. 225 to 226 (GS) contacts substrate.

The protein belongs to the diaminopimelate epimerase family. Homodimer.

Its subcellular location is the cytoplasm. The enzyme catalyses (2S,6S)-2,6-diaminopimelate = meso-2,6-diaminopimelate. It functions in the pathway amino-acid biosynthesis; L-lysine biosynthesis via DAP pathway; DL-2,6-diaminopimelate from LL-2,6-diaminopimelate: step 1/1. Catalyzes the stereoinversion of LL-2,6-diaminopimelate (L,L-DAP) to meso-diaminopimelate (meso-DAP), a precursor of L-lysine and an essential component of the bacterial peptidoglycan. This is Diaminopimelate epimerase from Rhodopseudomonas palustris (strain TIE-1).